The sequence spans 712 residues: Eukaryotic translation initiation factor 3 subunit B (712 aa).

The interval 1 to 98 (MSLTEAEYHE…LFVQFETSEM (98 aa)) is sufficient for interaction with HCR1 and TIF32. Residues 1–224 (MSLTEAEYHE…GVQSWGGADF (224 aa)) form a sufficient for interaction with PIC8 region. The 88-residue stretch at 37-124 (NYVVVDGAPI…HRLLVNRLSD (88 aa)) folds into the RRM domain. WD repeat units follow at residues 191–229 (RKFFTSKYAKFSPKGTYLFSIHPQGVQSWGGADFSSIDK), 230–293 (FMHN…RTFA), 301–339 (QKEMPWPLVKWSHDDKYCARQGPGALAVYETPSFQLLDK), 342–384 (IKID…QTAR), 452–493 (ELKE…DFYA), 513–555 (ITDK…SNKN), and 566–604 (DKFSGMTNISWDPSGRFVATWSSSWLHTIENGYKLYEFT).

The protein belongs to the eIF-3 subunit B family. Component of the eukaryotic translation initiation factor 3 (eIF-3) complex.

The protein localises to the cytoplasm. Functionally, RNA-binding component of the eukaryotic translation initiation factor 3 (eIF-3) complex, which is involved in protein synthesis of a specialized repertoire of mRNAs and, together with other initiation factors, stimulates binding of mRNA and methionyl-tRNAi to the 40S ribosome. The eIF-3 complex specifically targets and initiates translation of a subset of mRNAs involved in cell proliferation. This is Eukaryotic translation initiation factor 3 subunit B from Scheffersomyces stipitis (strain ATCC 58785 / CBS 6054 / NBRC 10063 / NRRL Y-11545) (Yeast).